Reading from the N-terminus, the 424-residue chain is Probable threonylcarbamoyladenosine tRNA methylthiotransferase (424 aa).

An MTTase N-terminal domain is found at Met1–Asn106. Cys10, Cys44, Cys73, Cys143, Cys147, and Cys150 together coordinate [4Fe-4S] cluster. One can recognise a Radical SAM core domain in the interval Leu129–Glu359. The TRAM domain maps to Lys362 to Ala420.

This sequence belongs to the methylthiotransferase family. CDKAL1 subfamily. The cofactor is [4Fe-4S] cluster.

It catalyses the reaction N(6)-L-threonylcarbamoyladenosine(37) in tRNA + (sulfur carrier)-SH + AH2 + 2 S-adenosyl-L-methionine = 2-methylsulfanyl-N(6)-L-threonylcarbamoyladenosine(37) in tRNA + (sulfur carrier)-H + 5'-deoxyadenosine + L-methionine + A + S-adenosyl-L-homocysteine + 2 H(+). In terms of biological role, catalyzes the methylthiolation of N6-threonylcarbamoyladenosine (t(6)A), leading to the formation of 2-methylthio-N6-threonylcarbamoyladenosine (ms(2)t(6)A) at position 37 in tRNAs that read codons beginning with adenine. The polypeptide is Probable threonylcarbamoyladenosine tRNA methylthiotransferase (Archaeoglobus fulgidus (strain ATCC 49558 / DSM 4304 / JCM 9628 / NBRC 100126 / VC-16)).